Here is a 331-residue protein sequence, read N- to C-terminus: uncharacterized protein (331 aa).

This sequence to bacterial alkanal monooxygenase alpha and beta chains.

This is an uncharacterized protein from Bacillus subtilis (strain 168).